We begin with the raw amino-acid sequence, 256 residues long: Tryptophan synthase alpha chain (256 aa).

Residues Glu51 and Asp62 each act as proton acceptor in the active site.

The protein belongs to the TrpA family. Tetramer of two alpha and two beta chains.

The enzyme catalyses (1S,2R)-1-C-(indol-3-yl)glycerol 3-phosphate + L-serine = D-glyceraldehyde 3-phosphate + L-tryptophan + H2O. The protein operates within amino-acid biosynthesis; L-tryptophan biosynthesis; L-tryptophan from chorismate: step 5/5. Its function is as follows. The alpha subunit is responsible for the aldol cleavage of indoleglycerol phosphate to indole and glyceraldehyde 3-phosphate. The sequence is that of Tryptophan synthase alpha chain from Solidesulfovibrio magneticus (strain ATCC 700980 / DSM 13731 / RS-1) (Desulfovibrio magneticus).